A 356-amino-acid polypeptide reads, in one-letter code: Holliday junction branch migration complex subunit RuvB (356 aa).

The large ATPase domain (RuvB-L) stretch occupies residues 13 to 197 (LPPARRMLSA…FGIVARLEFY (185 aa)). Residues Leu-36, Arg-37, Gly-78, Lys-81, Thr-82, Thr-83, 144 to 146 (EDY), Arg-187, Tyr-197, and Arg-234 each bind ATP. Thr-82 serves as a coordination point for Mg(2+). A small ATPAse domain (RuvB-S) region spans residues 198 to 268 (TPEELARIVK…IANRALAMLD (71 aa)). A head domain (RuvB-H) region spans residues 271–356 (PQGFDLMDRK…RGNAENLFEE (86 aa)). DNA-binding residues include Arg-326 and Arg-331.

It belongs to the RuvB family. As to quaternary structure, homohexamer. Forms an RuvA(8)-RuvB(12)-Holliday junction (HJ) complex. HJ DNA is sandwiched between 2 RuvA tetramers; dsDNA enters through RuvA and exits via RuvB. An RuvB hexamer assembles on each DNA strand where it exits the tetramer. Each RuvB hexamer is contacted by two RuvA subunits (via domain III) on 2 adjacent RuvB subunits; this complex drives branch migration. In the full resolvosome a probable DNA-RuvA(4)-RuvB(12)-RuvC(2) complex forms which resolves the HJ.

It is found in the cytoplasm. The enzyme catalyses ATP + H2O = ADP + phosphate + H(+). Its function is as follows. The RuvA-RuvB-RuvC complex processes Holliday junction (HJ) DNA during genetic recombination and DNA repair, while the RuvA-RuvB complex plays an important role in the rescue of blocked DNA replication forks via replication fork reversal (RFR). RuvA specifically binds to HJ cruciform DNA, conferring on it an open structure. The RuvB hexamer acts as an ATP-dependent pump, pulling dsDNA into and through the RuvAB complex. RuvB forms 2 homohexamers on either side of HJ DNA bound by 1 or 2 RuvA tetramers; 4 subunits per hexamer contact DNA at a time. Coordinated motions by a converter formed by DNA-disengaged RuvB subunits stimulates ATP hydrolysis and nucleotide exchange. Immobilization of the converter enables RuvB to convert the ATP-contained energy into a lever motion, pulling 2 nucleotides of DNA out of the RuvA tetramer per ATP hydrolyzed, thus driving DNA branch migration. The RuvB motors rotate together with the DNA substrate, which together with the progressing nucleotide cycle form the mechanistic basis for DNA recombination by continuous HJ branch migration. Branch migration allows RuvC to scan DNA until it finds its consensus sequence, where it cleaves and resolves cruciform DNA. This chain is Holliday junction branch migration complex subunit RuvB, found in Polaromonas naphthalenivorans (strain CJ2).